The primary structure comprises 282 residues: NADPH-dependent 7-cyano-7-deazaguanine reductase (282 aa).

Position 88-90 (88-90 (IES)) interacts with substrate. NADPH is bound at residue 90–91 (SK). The active-site Thioimide intermediate is Cys190. Asp197 serves as the catalytic Proton donor. Residue 229 to 230 (HE) coordinates substrate. Residue 258-259 (RG) participates in NADPH binding.

This sequence belongs to the GTP cyclohydrolase I family. QueF type 2 subfamily. Homodimer.

The protein resides in the cytoplasm. The catalysed reaction is 7-aminomethyl-7-carbaguanine + 2 NADP(+) = 7-cyano-7-deazaguanine + 2 NADPH + 3 H(+). The protein operates within tRNA modification; tRNA-queuosine biosynthesis. Catalyzes the NADPH-dependent reduction of 7-cyano-7-deazaguanine (preQ0) to 7-aminomethyl-7-deazaguanine (preQ1). The sequence is that of NADPH-dependent 7-cyano-7-deazaguanine reductase from Escherichia coli O139:H28 (strain E24377A / ETEC).